The sequence spans 89 residues: Small ribosomal subunit protein uS15 (89 aa).

This sequence belongs to the universal ribosomal protein uS15 family. In terms of assembly, part of the 30S ribosomal subunit. Forms a bridge to the 50S subunit in the 70S ribosome, contacting the 23S rRNA.

Functionally, one of the primary rRNA binding proteins, it binds directly to 16S rRNA where it helps nucleate assembly of the platform of the 30S subunit by binding and bridging several RNA helices of the 16S rRNA. Forms an intersubunit bridge (bridge B4) with the 23S rRNA of the 50S subunit in the ribosome. The sequence is that of Small ribosomal subunit protein uS15 from Streptococcus uberis (strain ATCC BAA-854 / 0140J).